Consider the following 400-residue polypeptide: Tektin-B1 (400 aa).

3 coiled-coil regions span residues 35-81 (TRLS…AKAL), 236-294 (FALR…LENR), and 310-353 (GLVN…LELK).

It belongs to the tektin family. May form a heterodimer with tektin a or exist as a homodimer. Cilia and flagella.

The protein localises to the cytoplasm. It is found in the cytoskeleton. Structural component of ciliary and flagellar microtubules. This is Tektin-B1 from Strongylocentrotus purpuratus (Purple sea urchin).